The following is a 509-amino-acid chain: GMP synthase [glutamine-hydrolyzing] (509 aa).

In terms of domain architecture, Glutamine amidotransferase type-1 spans 4 to 193 (KILILDFGSQ…VVHICGCSQD (190 aa)). Cysteine 79 acts as the Nucleophile in catalysis. Catalysis depends on residues histidine 167 and glutamate 169. The 191-residue stretch at 194–384 (WTPDAFVETT…LGIDDIILKR (191 aa)) folds into the GMPS ATP-PPase domain. Residue 221–227 (SGGVDSS) participates in ATP binding.

As to quaternary structure, homodimer.

It catalyses the reaction XMP + L-glutamine + ATP + H2O = GMP + L-glutamate + AMP + diphosphate + 2 H(+). It functions in the pathway purine metabolism; GMP biosynthesis; GMP from XMP (L-Gln route): step 1/1. Its function is as follows. Catalyzes the synthesis of GMP from XMP. The sequence is that of GMP synthase [glutamine-hydrolyzing] from Cytophaga hutchinsonii (strain ATCC 33406 / DSM 1761 / CIP 103989 / NBRC 15051 / NCIMB 9469 / D465).